Consider the following 340-residue polypeptide: Biotin synthase (340 aa).

The Radical SAM core domain occupies 56–283 (NAVQLSTLLS…KAVVRLSAGR (228 aa)). The [4Fe-4S] cluster site is built by Cys71, Cys75, and Cys78. The [2Fe-2S] cluster site is built by Cys115, Cys146, Cys206, and Arg278.

The protein belongs to the radical SAM superfamily. Biotin synthase family. Homodimer. It depends on [4Fe-4S] cluster as a cofactor. [2Fe-2S] cluster is required as a cofactor.

It carries out the reaction (4R,5S)-dethiobiotin + (sulfur carrier)-SH + 2 reduced [2Fe-2S]-[ferredoxin] + 2 S-adenosyl-L-methionine = (sulfur carrier)-H + biotin + 2 5'-deoxyadenosine + 2 L-methionine + 2 oxidized [2Fe-2S]-[ferredoxin]. It participates in cofactor biosynthesis; biotin biosynthesis; biotin from 7,8-diaminononanoate: step 2/2. Functionally, catalyzes the conversion of dethiobiotin (DTB) to biotin by the insertion of a sulfur atom into dethiobiotin via a radical-based mechanism. This Burkholderia lata (strain ATCC 17760 / DSM 23089 / LMG 22485 / NCIMB 9086 / R18194 / 383) protein is Biotin synthase.